Reading from the N-terminus, the 605-residue chain is Formin-binding protein 1-like (605 aa).

The 263-residue stretch at 1 to 263 folds into the F-BAR domain; it reads MSWGTELWDQ…AAKSVDERRD (263 aa). Residues 66–258 adopt a coiled-coil conformation; it reads FTSCVAFFNI…EGMILAAKSV (193 aa). An interaction with CDC42 region spans residues 245-535; it reads SKCLEGMILA…EFDDEFEDDD (291 aa). Residue serine 295 is modified to Phosphoserine. Residues 392 to 484 are a coiled coil; the sequence is LEDFSHLPPE…VEGKTGGRGD (93 aa). Residues 397–474 enclose the REM-1 domain; the sequence is HLPPEQRRKK…IHKNEAWLSE (78 aa). Residues 476 to 490 are compositionally biased toward basic and acidic residues; sequence EGKTGGRGDRRHSSD. The tract at residues 476–539 is disordered; the sequence is EGKTGGRGDR…EFEDDDPLPA (64 aa). Residues serine 488, serine 501, and serine 505 each carry the phosphoserine modification. The interaction with DNM1 stretch occupies residues 522–605; the sequence is GHHNEFDDEF…VTLEKNSKGS (84 aa). A compositionally biased stretch (acidic residues) spans 527–536; the sequence is FDDEFEDDDP. The SH3 domain maps to 538–599; sequence PAIGHCKAIY…PTSYIDVTLE (62 aa). The interval 541–597 is interaction with DNM2 and WASL; the sequence is GHCKAIYPFDGHNEGTLAMKEGEVLYIIEEDKGDGWTRARRQNGEEGYVPTSYIDVT. An interaction with DAAM1, DIAPH1 and DIAPH2 region spans residues 541–605; sequence GHCKAIYPFD…VTLEKNSKGS (65 aa).

Belongs to the FNBP1 family. As to quaternary structure, homodimerizes, the dimers can polymerize end-to-end to form filamentous structures. Interacts with GTP-bound CDC42. Interacts with DAAM1, DIAPH1, DIAPH2, DNM1, DNM2 and WASL/N-WASP. Interacts with ATG3. Interacts (via SH3 domain) with ABI1, WASF2, CDC42 and WIPF1.

The protein resides in the cytoplasm. It is found in the cytoskeleton. Its subcellular location is the cell cortex. It localises to the cytoplasmic vesicle. The protein localises to the cell membrane. Required to coordinate membrane tubulation with reorganization of the actin cytoskeleton during endocytosis. May bind to lipids such as phosphatidylinositol 4,5-bisphosphate and phosphatidylserine and promote membrane invagination and the formation of tubules. Also promotes CDC42-induced actin polymerization by activating the WASL/N-WASP-WASPIP/WIP complex, the predominant form of WASL/N-WASP in cells. Actin polymerization may promote the fission of membrane tubules to form endocytic vesicles. Essential for autophagy of intracellular bacterial pathogens. This is Formin-binding protein 1-like (FNBP1L) from Homo sapiens (Human).